We begin with the raw amino-acid sequence, 320 residues long: o-succinylbenzoate synthase (320 aa).

Lys-133 functions as the Proton donor in the catalytic mechanism. 3 residues coordinate Mg(2+): Asp-161, Glu-190, and Asp-213. The active-site Proton acceptor is the Lys-235.

The protein belongs to the mandelate racemase/muconate lactonizing enzyme family. MenC type 1 subfamily. It depends on a divalent metal cation as a cofactor.

It catalyses the reaction (1R,6R)-6-hydroxy-2-succinyl-cyclohexa-2,4-diene-1-carboxylate = 2-succinylbenzoate + H2O. It functions in the pathway quinol/quinone metabolism; 1,4-dihydroxy-2-naphthoate biosynthesis; 1,4-dihydroxy-2-naphthoate from chorismate: step 4/7. The protein operates within quinol/quinone metabolism; menaquinone biosynthesis. Its function is as follows. Converts 2-succinyl-6-hydroxy-2,4-cyclohexadiene-1-carboxylate (SHCHC) to 2-succinylbenzoate (OSB). This chain is o-succinylbenzoate synthase, found in Salmonella typhi.